Here is a 340-residue protein sequence, read N- to C-terminus: Leucine-rich repeat-containing protein 23 (340 aa).

Over residues 1–27 the composition is skewed to acidic residues; it reads MSDEDDVDDVDAEQDEVESDKEIEEWE. The tract at residues 1–38 is disordered; sequence MSDEDDVDDVDAEQDEVESDKEIEEWEDYRKETEEASE. LRR repeat units lie at residues 89–110, 111–134, 177–197, 198–219, 220–241, and 243–264; these read HLRY…NSLT, HLLW…PYLQ, SLHT…IYLP, KLKN…ENLS, NLTT…SQEM, and SLQY…AKLR. The segment at 205–340 is interaction with RSPH9; that stretch reads AQNLLKKVEG…QDMEPYLPPV (136 aa). The 39-residue stretch at 277-315 folds into the LRRCT domain; the sequence is NPCADETDYRQEALVQMAHLERLDKEFYEDDDRAEAEEI. Residues 305 to 328 are a coiled coil; it reads EDDDRAEAEEIRQRLKEEQDQDLD. Positions 317-340 are disordered; the sequence is QRLKEEQDQDLDPDQDMEPYLPPV. The segment covering 323–333 has biased composition (acidic residues); sequence QDQDLDPDQDM.

As to quaternary structure, component of the axonemal radial spoke complex. Interacts with RSPH3A and RSPH3B. Interacts with RSPH9. Expressed in the testis (at protein level).

The protein resides in the cytoplasm. It localises to the cytoskeleton. Its subcellular location is the flagellum axoneme. Functionally, essential for sperm motility and male fertility. Plays an important role in the proper assembly of the third radial spoke (RS3) head and the bridge structure between RS2 and RS3 in the sperm flagella. The protein is Leucine-rich repeat-containing protein 23 (Lrrc23) of Mus musculus (Mouse).